A 115-amino-acid polypeptide reads, in one-letter code: Large ribosomal subunit protein bL19 (115 aa).

The protein belongs to the bacterial ribosomal protein bL19 family.

Functionally, this protein is located at the 30S-50S ribosomal subunit interface and may play a role in the structure and function of the aminoacyl-tRNA binding site. The chain is Large ribosomal subunit protein bL19 from Bacillus velezensis (strain DSM 23117 / BGSC 10A6 / LMG 26770 / FZB42) (Bacillus amyloliquefaciens subsp. plantarum).